We begin with the raw amino-acid sequence, 228 residues long: Cytochrome b5 domain-containing protein 1 (228 aa).

In terms of domain architecture, Cytochrome b5 heme-binding spans 17 to 83 (RRYFTPSEVA…DPQTRDIRKH (67 aa)). H83 lines the heme pocket.

This sequence belongs to the cytochrome b5 family.

It is found in the cytoplasm. Its subcellular location is the cytoskeleton. It localises to the cilium axoneme. Functionally, radial spoke stalk protein that binds heme under oxidizing conditions. Required for the coordinated beating of multiple cilia maybe by functioning in a redox signaling pathway. In Mus musculus (Mouse), this protein is Cytochrome b5 domain-containing protein 1 (Cyb5d1).